Here is a 313-residue protein sequence, read N- to C-terminus: Acetaldehyde dehydrogenase (313 aa).

13–16 provides a ligand contact to NAD(+); the sequence is SGNI. The active-site Acyl-thioester intermediate is the cysteine 133. Residues 164-172 and asparagine 291 each bind NAD(+); that span reads SAGPGTRAN.

It belongs to the acetaldehyde dehydrogenase family.

It catalyses the reaction acetaldehyde + NAD(+) + CoA = acetyl-CoA + NADH + H(+). The polypeptide is Acetaldehyde dehydrogenase (Cupriavidus pinatubonensis (strain JMP 134 / LMG 1197) (Cupriavidus necator (strain JMP 134))).